The chain runs to 130 residues: MAKRKVIKKKIVRKNIAKGIVYISATFNNTMVTVTDEMGNAIAWSSAGGLGFKGSKKSTPYAAQQAVEDAMNKAKEHGIKEVGIKVQGPGSGRETAVKSIGGVEGIKVLYLKDITPLAHNGCRPPKRRRV.

Belongs to the universal ribosomal protein uS11 family. In terms of assembly, part of the 30S ribosomal subunit. Interacts with proteins S7 and S18. Binds to IF-3.

Its function is as follows. Located on the platform of the 30S subunit, it bridges several disparate RNA helices of the 16S rRNA. Forms part of the Shine-Dalgarno cleft in the 70S ribosome. This chain is Small ribosomal subunit protein uS11, found in Campylobacter fetus subsp. fetus (strain 82-40).